Reading from the N-terminus, the 712-residue chain is Aryl hydrocarbon receptor nuclear translocator 2 (712 aa).

Residues 36–73 (AGAMPARGGKRRSGMDFDDEDGEGPSKFSRENHSEIER) are disordered. At Arg42 the chain carries Omega-N-methylarginine. Residues 63-73 (FSRENHSEIER) show a composition bias toward basic and acidic residues. The 54-residue stretch at 63-116 (FSRENHSEIERRRRNKMTQYITELSDMVPTCSALARKPDKLTILRMAVSHMKSM) folds into the bHLH domain. PAS domains follow at residues 134-209 (TEQE…MTGR) and 323-393 (PVCM…VKLK). The PAC domain maps to 398 to 441 (SVMYRFRTKNREWLLIRTSSFTFQNPYSDEIEYVICTNTNVKQL). Residues 573–712 (AWTGSRPPFP…DLGMFPPFSE (140 aa)) are disordered. Composition is skewed to low complexity over residues 597 to 626 (SSHPYPADPSSYSPLSSPAASSPSGNAYPS) and 653 to 675 (SQWQSQHHGQQSGEQHSHQQPGQ).

Efficient DNA binding requires dimerization with another bHLH protein. Heterodimer with NPAS4 or SIM1. Heterodimer with the aryl hydrocarbon receptor (AHR) or the SIM1 protein. Interacts with TACC3. As to expression, restricted to adult brain and kidney.

It is found in the nucleus. Functionally, transcription factor that plays a role in the development of the hypothalamo-pituitary axis, postnatal brain growth, and visual and renal function. Specifically recognizes the xenobiotic response element (XRE). This is Aryl hydrocarbon receptor nuclear translocator 2 (Arnt2) from Mus musculus (Mouse).